Here is a 470-residue protein sequence, read N- to C-terminus: Nuclear receptor subfamily 0 group B member 1 (470 aa).

3 consecutive repeat copies span residues 1–67 (MAGE…YRCC), 68–133 (FCGK…YRCC), and 134–200 (FCGE…YRCC). The segment at 1-253 (MAGEDHQWQG…RPVALKNPQV (253 aa)) is 4 X 67 AA tandem repeats. Short sequence motifs (LXXLL motif) lie at residues 13-17 (LYNML), 80-84 (LYSML), and 146-150 (LYSLL). Residues 201–253 (FCGEDQPQQGSTLYSMPTSTNQTPAAPEERPGAPWWDTSCGALRPVALKNPQV) form a 4; truncated repeat. In terms of domain architecture, NR LBD spans 205–469 (DQPQQGSTLY…DMMLEMLCTK (265 aa)). The short motif at 461–466 (MMLEML) is the AF-2 motif element.

Belongs to the nuclear hormone receptor family. NR0 subfamily. In terms of assembly, homodimer. Interacts with NR5A1, NR5A2, NR0B2 and with COPS2. Interacts with ESRRB; represses ESRRB activity at the GATA6 promoter.

It localises to the nucleus. Its subcellular location is the cytoplasm. Its function is as follows. Nuclear receptor that lacks a DNA-binding domain and acts as a corepressor that inhibits the transcriptional activity of other nuclear receptors through heterodimeric interactions. Component of a cascade required for the development of the hypothalamic-pituitary-adrenal-gonadal axis. May also have a role in the development of the embryo and in the maintenance of embryonic stem cell pluripotency. This Callithrix jacchus (White-tufted-ear marmoset) protein is Nuclear receptor subfamily 0 group B member 1 (NR0B1).